A 476-amino-acid polypeptide reads, in one-letter code: Cysteine--tRNA ligase (476 aa).

Residue cysteine 31 coordinates Zn(2+). Positions 33-43 match the 'HIGH' region motif; it reads PTVYNYAHIGN. Cysteine 211, histidine 236, and glutamate 240 together coordinate Zn(2+). Positions 269 to 273 match the 'KMSKS' region motif; that stretch reads KMSKS. Lysine 272 serves as a coordination point for ATP.

This sequence belongs to the class-I aminoacyl-tRNA synthetase family. As to quaternary structure, monomer. Zn(2+) serves as cofactor.

The protein resides in the cytoplasm. It catalyses the reaction tRNA(Cys) + L-cysteine + ATP = L-cysteinyl-tRNA(Cys) + AMP + diphosphate. The chain is Cysteine--tRNA ligase from Xanthomonas oryzae pv. oryzae (strain MAFF 311018).